Here is a 72-residue protein sequence, read N- to C-terminus: Translation initiation factor IF-1 (72 aa).

The 72-residue stretch at 1–72 folds into the S1-like domain; it reads MSKEEVLEFS…TKGRITYRYK (72 aa).

The protein belongs to the IF-1 family. In terms of assembly, component of the 30S ribosomal translation pre-initiation complex which assembles on the 30S ribosome in the order IF-2 and IF-3, IF-1 and N-formylmethionyl-tRNA(fMet); mRNA recruitment can occur at any time during PIC assembly.

Its subcellular location is the cytoplasm. Its function is as follows. One of the essential components for the initiation of protein synthesis. Stabilizes the binding of IF-2 and IF-3 on the 30S subunit to which N-formylmethionyl-tRNA(fMet) subsequently binds. Helps modulate mRNA selection, yielding the 30S pre-initiation complex (PIC). Upon addition of the 50S ribosomal subunit IF-1, IF-2 and IF-3 are released leaving the mature 70S translation initiation complex. The chain is Translation initiation factor IF-1 from Bartonella tribocorum (strain CIP 105476 / IBS 506).